A 168-amino-acid polypeptide reads, in one-letter code: 2-C-methyl-D-erythritol 2,4-cyclodiphosphate synthase (168 aa).

2 residues coordinate a divalent metal cation: D15 and H17. 4-CDP-2-C-methyl-D-erythritol 2-phosphate is bound by residues 15–17 (DVH) and 45–46 (HS). H53 provides a ligand contact to a divalent metal cation. Residues 72 to 76 (FPNSD), F150, and R153 contribute to the 4-CDP-2-C-methyl-D-erythritol 2-phosphate site.

It belongs to the IspF family. In terms of assembly, homotrimer. It depends on a divalent metal cation as a cofactor.

It catalyses the reaction 4-CDP-2-C-methyl-D-erythritol 2-phosphate = 2-C-methyl-D-erythritol 2,4-cyclic diphosphate + CMP. It participates in isoprenoid biosynthesis; isopentenyl diphosphate biosynthesis via DXP pathway; isopentenyl diphosphate from 1-deoxy-D-xylulose 5-phosphate: step 4/6. In terms of biological role, involved in the biosynthesis of isopentenyl diphosphate (IPP) and dimethylallyl diphosphate (DMAPP), two major building blocks of isoprenoid compounds. Catalyzes the conversion of 4-diphosphocytidyl-2-C-methyl-D-erythritol 2-phosphate (CDP-ME2P) to 2-C-methyl-D-erythritol 2,4-cyclodiphosphate (ME-CPP) with a corresponding release of cytidine 5-monophosphate (CMP). The protein is 2-C-methyl-D-erythritol 2,4-cyclodiphosphate synthase of Anaplasma phagocytophilum (strain HZ).